We begin with the raw amino-acid sequence, 532 residues long: Deoxyribodipyrimidine photo-lyase (532 aa).

The disordered stretch occupies residues 1 to 57 (MDSKKRSHSTGGEAENMESQESKAKRKPLQKHQFSKSNVVQKEEKDKTEGEEKGAEG). Over residues 24–34 (AKRKPLQKHQF) the composition is skewed to basic residues. Residues 41 to 55 (QKEEKDKTEGEEKGA) are compositionally biased toward basic and acidic residues. The Photolyase/cryptochrome alpha/beta domain maps to 97-229 (QAFVYWMSRD…QVDAHNIVPC (133 aa)). Arg-322 lines the DNA pocket. 2 interaction with DNA regions span residues 368–376 (EAVVRRELA) and 442–443 (GF). An FAD-binding site is contributed by 468-470 (YLN).

The protein belongs to the DNA photolyase class-2 family. FAD is required as a cofactor.

It catalyses the reaction cyclobutadipyrimidine (in DNA) = 2 pyrimidine residues (in DNA).. Functionally, involved in repair of UV radiation-induced DNA damage. Catalyzes the light-dependent monomerization (300-600 nm) of cyclobutyl pyrimidine dimers (in cis-syn configuration), which are formed between adjacent bases on the same DNA strand upon exposure to ultraviolet radiation. This chain is Deoxyribodipyrimidine photo-lyase (PHR), found in Potorous tridactylus (Potoroo).